Here is a 201-residue protein sequence, read N- to C-terminus: MIILGLTGGIGSGKSLVASYFNRFVKAVVFDADNVVNNLYNFDNNVIELVKSYFPTSVNNGVVDKNDLKHYFLLYDDLWIKFQSELHSIVWKIQKDFILSNSRRVTKYVVLDVPLLIEANYHNCCDFVIHVKANSILQRQRLLKRGMSRHEFELISRLQLSDNDRKRLSDFTIRTGLSKNFVVSQVKDIVFQIDSRVGCKI.

The region spanning 3 to 201 (ILGLTGGIGS…QIDSRVGCKI (199 aa)) is the DPCK domain. Residue 11–16 (GSGKSL) participates in ATP binding.

Belongs to the CoaE family.

It is found in the cytoplasm. It catalyses the reaction 3'-dephospho-CoA + ATP = ADP + CoA + H(+). It functions in the pathway cofactor biosynthesis; coenzyme A biosynthesis; CoA from (R)-pantothenate: step 5/5. Catalyzes the phosphorylation of the 3'-hydroxyl group of dephosphocoenzyme A to form coenzyme A. The polypeptide is Dephospho-CoA kinase (Ehrlichia ruminantium (strain Welgevonden)).